The following is a 426-amino-acid chain: Putative two-component response regulator ARR20 (426 aa).

The 116-residue stretch at 40–155 folds into the Response regulatory domain; it reads SNRVLLVGAD…VIAVLWRHVY (116 aa). Aspartate 91 is subject to 4-aspartylphosphate. The tract at residues 161–216 is disordered; it reads KSGLDKPGESGTVESDPDEYDDLEQDNLYESNEEGSKNTCDHKEEKSPTKKPRMQW. The span at 175–193 shows a compositional bias: acidic residues; that stretch reads SDPDEYDDLEQDNLYESNE. Positions 194-208 are enriched in basic and acidic residues; the sequence is EGSKNTCDHKEEKSP. The Nuclear localization signal signature appears at 210–213; sequence KKPR. The segment at residues 213–268 is a DNA-binding region (myb-like GARP); it reads RMQWTPELHHKFEVAVEKMGSLEKAFPKTILKYMQEELNVQGLTRNNVASHLQKYR.

The protein belongs to the ARR family. Type-B subfamily. Binds the target DNA as a monomer. Post-translationally, two-component system major event consists of a His-to-Asp phosphorelay between a sensor histidine kinase (HK) and a response regulator (RR). In plants, the His-to-Asp phosphorelay involves an additional intermediate named Histidine-containing phosphotransfer protein (HPt). This multistep phosphorelay consists of a His-Asp-His-Asp sequential transfer of a phosphate group between first a His and an Asp of the HK protein, followed by the transfer to a conserved His of the HPt protein and finally the transfer to an Asp in the receiver domain of the RR protein. Predominantly expressed in mature pistil tip. Also detected in the shoot apical meristem as well as vascular tissue and hydathodes of the leaves.

It is found in the nucleus. In terms of biological role, putative transcriptional activator that binds specifically to the DNA sequence 5'-[AG]GATT-3'. Functions as a response regulator involved in His-to-Asp phosphorelay signal transduction system. Phosphorylation of the Asp residue in the receiver domain activates the ability of the protein to promote the transcription of target genes. Could directly activate some type-A response regulators in response to cytokinins. In Arabidopsis thaliana (Mouse-ear cress), this protein is Putative two-component response regulator ARR20 (ARR20).